Here is a 95-residue protein sequence, read N- to C-terminus: Co-chaperonin GroES (95 aa).

This sequence belongs to the GroES chaperonin family. Heptamer of 7 subunits arranged in a ring. Interacts with the chaperonin GroEL.

The protein resides in the cytoplasm. In terms of biological role, together with the chaperonin GroEL, plays an essential role in assisting protein folding. The GroEL-GroES system forms a nano-cage that allows encapsulation of the non-native substrate proteins and provides a physical environment optimized to promote and accelerate protein folding. GroES binds to the apical surface of the GroEL ring, thereby capping the opening of the GroEL channel. The sequence is that of Co-chaperonin GroES from Xanthomonas axonopodis pv. citri (strain 306).